Consider the following 141-residue polypeptide: Hemoglobin subunit alpha-3 (141 aa).

The Globin domain maps to 1–141 (VLSPADKTNV…VSTVLTSKYR (141 aa)). An O2-binding site is contributed by His-58. Residue His-87 participates in heme b binding.

The protein belongs to the globin family. Heterotetramer of two alpha chains and two beta chains. As to expression, red blood cells.

Its function is as follows. Involved in oxygen transport from the lung to the various peripheral tissues. The sequence is that of Hemoglobin subunit alpha-3 from Gorilla gorilla gorilla (Western lowland gorilla).